A 122-amino-acid polypeptide reads, in one-letter code: Large ribosomal subunit protein uL18 (122 aa).

This sequence belongs to the universal ribosomal protein uL18 family. As to quaternary structure, part of the 50S ribosomal subunit; part of the 5S rRNA/L5/L18/L25 subcomplex. Contacts the 5S and 23S rRNAs.

Functionally, this is one of the proteins that bind and probably mediate the attachment of the 5S RNA into the large ribosomal subunit, where it forms part of the central protuberance. This is Large ribosomal subunit protein uL18 from Trichlorobacter lovleyi (strain ATCC BAA-1151 / DSM 17278 / SZ) (Geobacter lovleyi).